The primary structure comprises 205 residues: Protein N-terminal glutamine amidohydrolase (205 aa).

Residues Cys-20, His-74, and Asp-90 contribute to the active site.

It belongs to the NTAQ1 family. As to quaternary structure, monomer.

The enzyme catalyses N-terminal L-glutaminyl-[protein] + H2O = N-terminal L-glutamyl-[protein] + NH4(+). Its function is as follows. Mediates the side-chain deamidation of N-terminal glutamine residues to glutamate, an important step in N-end rule pathway of protein degradation. Conversion of the resulting N-terminal glutamine to glutamate renders the protein susceptible to arginylation, polyubiquitination and degradation as specified by the N-end rule. Does not act on substrates with internal or C-terminal glutamine and does not act on non-glutamine residues in any position. This Drosophila grimshawi (Hawaiian fruit fly) protein is Protein N-terminal glutamine amidohydrolase (tun).